The sequence spans 158 residues: Crossover junction endodeoxyribonuclease RuvC (158 aa).

Catalysis depends on residues Asp-7, Glu-67, and Asp-140. Positions 7, 67, and 140 each coordinate Mg(2+).

It belongs to the RuvC family. Homodimer which binds Holliday junction (HJ) DNA. The HJ becomes 2-fold symmetrical on binding to RuvC with unstacked arms; it has a different conformation from HJ DNA in complex with RuvA. In the full resolvosome a probable DNA-RuvA(4)-RuvB(12)-RuvC(2) complex forms which resolves the HJ. Requires Mg(2+) as cofactor.

It is found in the cytoplasm. It carries out the reaction Endonucleolytic cleavage at a junction such as a reciprocal single-stranded crossover between two homologous DNA duplexes (Holliday junction).. Functionally, the RuvA-RuvB-RuvC complex processes Holliday junction (HJ) DNA during genetic recombination and DNA repair. Endonuclease that resolves HJ intermediates. Cleaves cruciform DNA by making single-stranded nicks across the HJ at symmetrical positions within the homologous arms, yielding a 5'-phosphate and a 3'-hydroxyl group; requires a central core of homology in the junction. The consensus cleavage sequence is 5'-(A/T)TT(C/G)-3'. Cleavage occurs on the 3'-side of the TT dinucleotide at the point of strand exchange. HJ branch migration catalyzed by RuvA-RuvB allows RuvC to scan DNA until it finds its consensus sequence, where it cleaves and resolves the cruciform DNA. The protein is Crossover junction endodeoxyribonuclease RuvC of Dictyoglomus turgidum (strain DSM 6724 / Z-1310).